The sequence spans 845 residues: Disintegrin and metalloproteinase domain-containing protein 9 (845 aa).

Residues Met-1–Ala-29 form the signal peptide. At Gly-30–Asp-697 the chain is on the extracellular side. 3 N-linked (GlcNAc...) asparagine glycosylation sites follow: Asn-144, Asn-154, and Asn-231. Residues Arg-212 to Pro-406 enclose the Peptidase M12B domain. 4 cysteine pairs are disulfide-bonded: Cys-322/Cys-401, Cys-363/Cys-385, Cys-365/Cys-370, and Cys-473/Cys-493. His-347 provides a ligand contact to Zn(2+). Glu-348 is an active-site residue. Zn(2+)-binding residues include His-351 and His-357. N-linked (GlcNAc...) asparagine glycosylation is found at Asn-381, Asn-487, and Asn-636. Residues Ala-414–Asn-501 enclose the Disintegrin domain. Cystine bridges form between Cys-644-Cys-656, Cys-650-Cys-662, and Cys-664-Cys-673. Residues Cys-644–Gly-698 enclose the EGF-like domain. Residues Gly-698–Ile-718 form a helical membrane-spanning segment. Residues Lys-719–Thr-845 are Cytoplasmic-facing. Residues Lys-729–Thr-845 are disordered. Over residues Met-734–Arg-745 the composition is skewed to polar residues. Residues Pro-783–Gly-794 show a composition bias toward pro residues.

In terms of assembly, interacts with SH3GL2 and SNX9 through its cytoplasmic tail. Interacts with ITGA6. Zn(2+) is required as a cofactor. In terms of processing, proteolytically cleaved in the trans-Golgi network before it reaches the plasma membrane to generate a mature protein. The removal of the pro-domain occurs via cleavage at two different sites. Processed most likely by a pro-protein convertase such as furin, at the boundary between the pro-domain and the catalytic domain. An additional upstream cleavage pro-protein convertase site (Arg-56/Glu-57) has an important role in the activation of ADAM9. Post-translationally, phosphorylation is induced in vitro by phorbol-12-myristate-13-acetate (PMA).

The protein resides in the cell membrane. Synthesized as an inactive form which is proteolytically cleaved to generate an active enzyme. Processing at the upstream site is particularly important for activation of the proenzyme, whereas processing at the boundary between the pro-domain and the catalytic domain does not appear to be essential. Inhibited by hydroxamic acid-based inhibitors. Functionally, metalloprotease that cleaves and releases a number of molecules with important roles in tumorigenesis and angiogenesis, such as TEK, KDR, EPHB4, CD40, VCAM1 and CDH5. May mediate cell-cell, cell-matrix interactions and regulate the motility of cells via interactions with integrins. The sequence is that of Disintegrin and metalloproteinase domain-containing protein 9 from Mus musculus (Mouse).